Reading from the N-terminus, the 340-residue chain is Protein RecA (340 aa).

67 to 74 provides a ligand contact to ATP; it reads GNESSGKT.

The protein belongs to the RecA family.

It is found in the cytoplasm. Functionally, can catalyze the hydrolysis of ATP in the presence of single-stranded DNA, the ATP-dependent uptake of single-stranded DNA by duplex DNA, and the ATP-dependent hybridization of homologous single-stranded DNAs. It interacts with LexA causing its activation and leading to its autocatalytic cleavage. This is Protein RecA from Mycoplasma genitalium (strain ATCC 33530 / DSM 19775 / NCTC 10195 / G37) (Mycoplasmoides genitalium).